A 780-amino-acid chain; its full sequence is Chromatin structure-remodeling complex subunit rsc9 (780 aa).

Residues 20-112 (TNENDSFLSL…YLISWEIHDH (93 aa)) form the ARID domain. Position 230 is a phosphothreonine (Thr-230). The segment at residues 530-609 (SVKWMRCCFE…YVINGIKRRK (80 aa)) is a DNA-binding region (RFX-type winged-helix). The residue at position 696 (Ser-696) is a Phosphoserine.

Belongs to the RSC9 family. Component of the RSC complex composed of at least arp9, arp42, rsc1, rsc4, rsc7, rsc9, rsc58, sfh1, snf21, ssr1, ssr2, ssr3 and ssr4. The complex interacts with histone and histone variant components of centromeric chromatin.

It localises to the cytoplasm. The protein localises to the nucleus. In terms of biological role, component of the chromatin structure remodeling complex (RSC), which is involved in transcription regulation and nucleosome positioning. Controls particularly membrane and organelle development genes. The chain is Chromatin structure-remodeling complex subunit rsc9 (rsc9) from Schizosaccharomyces pombe (strain 972 / ATCC 24843) (Fission yeast).